A 397-amino-acid chain; its full sequence is Anhydro-N-acetylmuramic acid kinase (397 aa).

21–28 (GTSLDGVD) contacts ATP. Over residues 373-384 (TPTNLPSVTGAS) the composition is skewed to polar residues. Residues 373 to 397 (TPTNLPSVTGASARTPLGSLSVPGP) are disordered.

This sequence belongs to the anhydro-N-acetylmuramic acid kinase family.

The catalysed reaction is 1,6-anhydro-N-acetyl-beta-muramate + ATP + H2O = N-acetyl-D-muramate 6-phosphate + ADP + H(+). It functions in the pathway amino-sugar metabolism; 1,6-anhydro-N-acetylmuramate degradation. The protein operates within cell wall biogenesis; peptidoglycan recycling. Its function is as follows. Catalyzes the specific phosphorylation of 1,6-anhydro-N-acetylmuramic acid (anhMurNAc) with the simultaneous cleavage of the 1,6-anhydro ring, generating MurNAc-6-P. Is required for the utilization of anhMurNAc either imported from the medium or derived from its own cell wall murein, and thus plays a role in cell wall recycling. In Salinibacter ruber (strain DSM 13855 / M31), this protein is Anhydro-N-acetylmuramic acid kinase.